A 106-amino-acid chain; its full sequence is Thiosulfate sulfurtransferase GlpE (106 aa).

In terms of domain architecture, Rhodanese spans 16–104 (REQGAVLVDV…WRATYPDETV (89 aa)). Cysteine 64 acts as the Cysteine persulfide intermediate in catalysis.

It belongs to the GlpE family.

The protein resides in the cytoplasm. The catalysed reaction is thiosulfate + hydrogen cyanide = thiocyanate + sulfite + 2 H(+). The enzyme catalyses thiosulfate + [thioredoxin]-dithiol = [thioredoxin]-disulfide + hydrogen sulfide + sulfite + 2 H(+). Its function is as follows. Transferase that catalyzes the transfer of sulfur from thiosulfate to thiophilic acceptors such as cyanide or dithiols. May function in a CysM-independent thiosulfate assimilation pathway by catalyzing the conversion of thiosulfate to sulfite, which can then be used for L-cysteine biosynthesis. This is Thiosulfate sulfurtransferase GlpE from Pseudomonas savastanoi pv. phaseolicola (strain 1448A / Race 6) (Pseudomonas syringae pv. phaseolicola (strain 1448A / Race 6)).